We begin with the raw amino-acid sequence, 88 residues long: Alpha-latrotoxin associated low molecular weight protein 2 (88 aa).

Residues 1–19 (MLKLICIVFLVTVLTFVVG) form the signal peptide. Cystine bridges form between C30/C66, C46/C62, and C49/C75.

It belongs to the arthropod CHH/MIH/GIH/VIH hormone family. In terms of tissue distribution, expressed by the venom gland.

It is found in the secreted. Its function is as follows. May increase the toxicity of alpha-latrotoxin and/or other venom components. Is non-toxic to mice and to the cockroach Periplaneta americana. This Latrodectus geometricus (Brown widow spider) protein is Alpha-latrotoxin associated low molecular weight protein 2.